The following is a 131-amino-acid chain: uncharacterized protein (131 aa).

The first 26 residues, 1–26 (MKKIVAAIVVIGLVFIAFFYLYSRSG), serve as a signal peptide directing secretion.

This is an uncharacterized protein from Bacillus subtilis (strain 168).